The chain runs to 466 residues: Anthocyanidin 3-O-glucosyltransferase 1 (466 aa).

The Proton acceptor role is filled by histidine 22. The an anthocyanidin site is built by histidine 22 and glutamine 87. Aspartate 122 acts as the Charge relay in catalysis. Threonine 145 contacts UDP-alpha-D-glucose. Position 154 (histidine 154) interacts with an anthocyanidin. Positions 346, 348, 363, 366, 367, 368, and 371 each coordinate UDP-alpha-D-glucose. Glycine 386 is an an anthocyanidin binding site. UDP-alpha-D-glucose is bound by residues aspartate 387 and glutamine 388.

This sequence belongs to the UDP-glycosyltransferase family. As to expression, highest expression detected in receptacles and achenes, with very low levels detected in runners, leaves, flowers, crowns and green receptacles.

The enzyme catalyses an anthocyanidin + UDP-alpha-D-glucose + H(+) = an anthocyanidin 3-O-beta-D-glucoside + UDP. The catalysed reaction is cyanidin + UDP-alpha-D-glucose = cyanidin 3-O-beta-D-glucoside + UDP + H(+). It carries out the reaction pelargonidin + UDP-alpha-D-glucose = pelargonidin 3-O-beta-D-glucoside + UDP. It catalyses the reaction peonidin + UDP-alpha-D-glucose = peonidin 3-O-beta-D-glucoside + UDP. The enzyme catalyses delphinidin + UDP-alpha-D-glucose = delphinidin 3-O-beta-D-glucoside + UDP. The catalysed reaction is a flavonol + UDP-alpha-D-glucose = a flavonol 3-O-beta-D-glucoside + UDP + H(+). Its pathway is pigment biosynthesis; anthocyanin biosynthesis. Functionally, in the presence of other necessary color factors, this glycosylation reaction allows the accumulation of anthocyanin pigments. Uses UDP-Glc as a sugar donor, but not UDP-Gal or UDP-GlcUA. Anthocyanidins are the preferred substrates in vivo, but flavonols can also be glucosylated in vitro. The chain is Anthocyanidin 3-O-glucosyltransferase 1 from Fragaria ananassa (Strawberry).